Reading from the N-terminus, the 144-residue chain is MGRRDSGRAVAQRYRGVTRGVTVIACLMVVCACVGLCDATGQKRHSWEAPGCHLVGHTRVVRIPDCVPFQITTNACRGFCVSYAIPSPYQTLVYNPNHIITSRAACCDIIDTLDIPVQVTCVDGVREIVFKSARSCACSICRRE.

The first 41 residues, 1–41, serve as a signal peptide directing secretion; it reads MGRRDSGRAVAQRYRGVTRGVTVIACLMVVCACVGLCDATG. Disulfide bonds link C52–C107, C66–C121, C76–C136, and C80–C138.

The protein belongs to the glycoprotein hormones subunit alpha family. In terms of assembly, heterodimer with GPHB5; non-covalently-linked. As to expression, expressed by the venom duct.

The protein localises to the secreted. The protein is Thyrostimulin alpha-2 subunit of Conus victoriae (Queen Victoria cone).